Consider the following 392-residue polypeptide: UPF0229 protein CPE1333 (392 aa).

The interval 75 to 100 (VTTGTGEERRGDRISSDKRKAISNNK) is disordered. A compositionally biased stretch (basic and acidic residues) spans 80-94 (GEERRGDRISSDKRK).

It belongs to the UPF0229 family.

The chain is UPF0229 protein CPE1333 from Clostridium perfringens (strain 13 / Type A).